Here is a 254-residue protein sequence, read N- to C-terminus: N-acetylglucosaminyldiphosphoundecaprenol N-acetyl-beta-D-mannosaminyltransferase (254 aa).

The protein belongs to the glycosyltransferase 26 family. TagA/TarA subfamily.

It carries out the reaction UDP-N-acetyl-alpha-D-mannosamine + N-acetyl-alpha-D-glucosaminyl-di-trans,octa-cis-undecaprenyl diphosphate = N-acetyl-beta-D-mannosaminyl-(1-&gt;4)-N-acetyl-alpha-D-glucosaminyl di-trans,octa-cis-undecaprenyl diphosphate + UDP + H(+). It participates in cell wall biogenesis; poly(ribitol phosphate) teichoic acid biosynthesis. Its function is as follows. Catalyzes the conversion of GlcNAc-PP-undecaprenol into ManNAc-GlcNAc-PP-undecaprenol, the first committed lipid intermediate in the de novo synthesis of teichoic acid. The sequence is that of N-acetylglucosaminyldiphosphoundecaprenol N-acetyl-beta-D-mannosaminyltransferase from Staphylococcus aureus (strain NCTC 8325 / PS 47).